The primary structure comprises 130 residues: Large ribosomal subunit protein bL19 (130 aa).

It belongs to the bacterial ribosomal protein bL19 family.

Its function is as follows. This protein is located at the 30S-50S ribosomal subunit interface and may play a role in the structure and function of the aminoacyl-tRNA binding site. The protein is Large ribosomal subunit protein bL19 of Parvibaculum lavamentivorans (strain DS-1 / DSM 13023 / NCIMB 13966).